Reading from the N-terminus, the 530-residue chain is uncharacterized protein (530 aa).

Residues Ser485–Glu529 adopt a coiled-coil conformation.

This is an uncharacterized protein from Acanthamoeba polyphaga (Amoeba).